The following is a 368-amino-acid chain: Phosphotransferase IIC component GlvC (368 aa).

Over 1-11 (MLSQIQRFGGA) the chain is Periplasmic. Residues 1-368 (MLSQIQRFGG…VGNMGGGLID (368 aa)) form the PTS EIIC type-1 domain. A helical membrane pass occupies residues 12–32 (MFTPVLLFPFAGIVVGLAILL). Topologically, residues 33-59 (QNPMFVGESLTDPNSLFAQIVHIIEEG) are cytoplasmic. The chain crosses the membrane as a helical span at residues 60–80 (GWTVFRNMPLIFAVGLPIGLA). Over 81–86 (KQAQGR) the chain is Periplasmic. A helical membrane pass occupies residues 87–107 (ACLAVMVSFLTWNYFINAMGM). At 108–129 (TWGSYFGVDFTQDAVAGSGLTM) the chain is on the cytoplasmic side. Residues 130-150 (MAGIKTLDTSIIGAIIISGIV) form a helical membrane-spanning segment. Residues 151–173 (TALHNRLFDKKLPVFLGIFQGTS) are Periplasmic-facing. A helical membrane pass occupies residues 174 to 194 (YVVIIAFLVMIPCAWLTLLGW). The Cytoplasmic portion of the chain corresponds to 195 to 198 (PKVQ). The chain crosses the membrane as a helical span at residues 199–221 (MGIESLQAFLRSAGALGVWVYTF). Over 222-224 (LER) the chain is Periplasmic. A helical membrane pass occupies residues 225-245 (ILIPTGLHHFIYGQFIFGPAA). At 246–276 (VEGGIQMYWAQHLQEFSLSAEPLKSLFPEGG) the chain is on the cytoplasmic side. A helical membrane pass occupies residues 277–297 (FALHGNSKIFGAVGISLAMYF). The Periplasmic portion of the chain corresponds to 298–306 (TAAPENRVK). A helical transmembrane segment spans residues 307-327 (VAGLLIPATLTAMLVGITEPL). Glutamate 328 is a topological domain (cytoplasmic). The chain crosses the membrane as a helical span at residues 329–349 (FTFLFISPLLFAVHAVLAASM). At 350-368 (STVMYLFGVVGNMGGGLID) the chain is on the periplasmic side.

It localises to the cell inner membrane. Its function is as follows. The phosphoenolpyruvate-dependent sugar phosphotransferase system (PTS), a major carbohydrate active -transport system, catalyzes the phosphorylation of incoming sugar substrates concomitant with their translocation across the cell membrane. This operon may be cryptic in wild-type K12 strains. This chain is Phosphotransferase IIC component GlvC, found in Escherichia coli (strain K12).